Consider the following 169-residue polypeptide: MTHCCSPCCQPTCCRTTCWKPTTVTTCSSTPCCQPSCCVSSCCQPCCHPTCCQNTCCRTTCCQPTCVTSCCQPSCCSTPCCQPICCGSSCCGQTSCGSSCCQPSSCAPIYCRRTCYHPTSVYLPGCLNQSCGSSCCQPCCRPACCETTCCRTTCFQPTCVTSCCQPACC.

Repeat copies occupy residues 8–12 (CCQPT), 13–17 (CCRTT), 32–36 (CCQPS), 37–41 (CCVSS), 46–50 (CCHPT), 51–55 (CCQNT), 56–60 (CCRTT), 61–65 (CCQPT), 75–79 (CCSTP), 80–84 (CCQPI), 85–89 (CCGSS), 90–94 (CCGQT), 100–104 (CCQPS), 139–143 (CCRPA), 144–148 (CCETT), 149–153 (CCRTT), and 163–167 (CCQPA). The tract at residues 8–167 (CCQPTCCRTT…TCVTSCCQPA (160 aa)) is 17 X 5 AA repeats of C-C-[VGSREQH]-[SQTPN]-[STPAI].

The protein belongs to the KRTAP type 9 family. In terms of assembly, interacts with hair keratins.

In the hair cortex, hair keratin intermediate filaments are embedded in an interfilamentous matrix, consisting of hair keratin-associated proteins (KRTAP), which are essential for the formation of a rigid and resistant hair shaft through their extensive disulfide bond cross-linking with abundant cysteine residues of hair keratins. The matrix proteins include the high-sulfur and high-glycine-tyrosine keratins. This chain is Keratin-associated protein 9-7, found in Homo sapiens (Human).